A 574-amino-acid chain; its full sequence is Sulfate adenylyltransferase (574 aa).

The tract at residues 1-169 (MANTPHGGVL…IEAVNKLNHY (169 aa)) is N-terminal. Residues 170–394 (DYVALRYTPA…LRESNPPRAS (225 aa)) are catalytic. Gln-197 contributes to the sulfate binding site. ATP contacts are provided by residues 197–200 (QTRN) and 291–294 (GRDH). Active-site residues include Thr-198, Arg-199, and Asn-200. Arg-199 is a sulfate binding site. Residue Ala-295 participates in sulfate binding. Val-333 contributes to the ATP binding site. Residues 395-574 (QGFTIFLTGY…LESEGYFERL (180 aa)) form an allosteric regulation domain; adenylyl-sulfate kinase-like region. 3'-phosphoadenylyl sulfate contacts are provided by residues 434-437 (DTVR), Arg-451, 477-478 (IA), and Arg-516.

It in the N-terminal section; belongs to the sulfate adenylyltransferase family. The protein in the C-terminal section; belongs to the APS kinase family. In terms of assembly, homohexamer. Dimer of trimers.

The protein resides in the cytoplasm. The enzyme catalyses sulfate + ATP + H(+) = adenosine 5'-phosphosulfate + diphosphate. It participates in sulfur metabolism; hydrogen sulfide biosynthesis; sulfite from sulfate: step 1/3. With respect to regulation, allosterically inhibited by 3'-phosphoadenosine 5'-phosphosulfate (PAPS). Functionally, catalyzes the first intracellular reaction of sulfate assimilation, forming adenosine-5'-phosphosulfate (APS) from inorganic sulfate and ATP. Plays an important role in sulfate activation as a component of the biosynthesis pathway of sulfur-containing amino acids. This Aspergillus niger protein is Sulfate adenylyltransferase.